The following is a 600-amino-acid chain: Keratin, type II cuticular Hb4 (600 aa).

The head stretch occupies residues 1-165 (MSCRSYRVSS…PNAQRVKKDE (165 aa)). One can recognise an IF rod domain in the interval 165–476 (EKEQIKTLNN…RLLEGEESRL (312 aa)). The tract at residues 166-200 (KEQIKTLNNKFASFIDKVRFLEQQNKLLETKWSFL) is coil 1A. The tract at residues 201–210 (QEQKCIRSNL) is linker 1. Residues 211 to 311 (EPLFESYITN…YMEEIQLLQS (101 aa)) form a coil 1B region. The linker 12 stretch occupies residues 312 to 328 (HISETSVIVKMDNSRDL). The coil 2 stretch occupies residues 329-472 (NLDGIIAEVK…ATYRRLLEGE (144 aa)). Positions 473–600 (ESRLCEGVGP…STTTSCRTKY (128 aa)) are tail.

This sequence belongs to the intermediate filament family. As to quaternary structure, heterotetramer of two type I and two type II keratins. In terms of tissue distribution, expressed in the hair follicles.

The chain is Keratin, type II cuticular Hb4 (KRT84) from Homo sapiens (Human).